The primary structure comprises 235 residues: Small ribosomal subunit protein uS3 (235 aa).

The 69-residue stretch at 39–107 folds into the KH type-2 domain; it reads VRKFLLGQLS…PTKLNISEIR (69 aa).

Belongs to the universal ribosomal protein uS3 family. As to quaternary structure, part of the 30S ribosomal subunit. Forms a tight complex with proteins S10 and S14.

Its function is as follows. Binds the lower part of the 30S subunit head. Binds mRNA in the 70S ribosome, positioning it for translation. The protein is Small ribosomal subunit protein uS3 of Blochmanniella floridana.